Reading from the N-terminus, the 512-residue chain is ETS translocation variant 3 (512 aa).

The segment at residues 35 to 116 is a DNA-binding region (ETS); sequence IQLWHFILEL…KGKRFTYKFN (82 aa). The disordered stretch occupies residues 136–222; the sequence is VPQSAPPVPT…NAIGGGGIGH (87 aa). A phosphoserine mark is found at serine 139, serine 159, and serine 315. Residues 158-184 are compositionally biased toward polar residues; it reads HSPTNDVQPGRFSASSLTASGQESSNG. Positions 336 to 512 are disordered; the sequence is PEESTQFSIK…QGLATAAADA (177 aa). Residues 380–406 show a composition bias toward basic and acidic residues; the sequence is IKVEPASEKDPESLRQSAREKEEHTQE. Lysine 381 participates in a covalent cross-link: Glycyl lysine isopeptide (Lys-Gly) (interchain with G-Cter in SUMO2). N6-acetyllysine; alternate is present on lysine 388. Lysine 388 participates in a covalent cross-link: Glycyl lysine isopeptide (Lys-Gly) (interchain with G-Cter in SUMO2); alternate. Over residues 443–452 the composition is skewed to acidic residues; it reads EPLEVTEDIE. Composition is skewed to basic and acidic residues over residues 453-468 and 479-491; these read DRPGKEPSAPEKKEDA and RWNDDPEARELSK.

This sequence belongs to the ETS family.

It localises to the nucleus. Functionally, transcriptional repressor that contribute to growth arrest during terminal macrophage differentiation by repressing target genes involved in Ras-dependent proliferation. Represses MMP1 promoter activity. The chain is ETS translocation variant 3 (ETV3) from Pan paniscus (Pygmy chimpanzee).